A 175-amino-acid polypeptide reads, in one-letter code: Two-on-two hemoglobin-3 (175 aa).

Positions 85 and 98 each coordinate heme. The interval 153-175 is disordered; the sequence is QNEKPKHKPQCACKHAANKPAEE.

Belongs to the truncated hemoglobin family. Group II subfamily. In terms of assembly, homodimer when ferric. Interacts with RGLG3 and RGLG4. The cofactor is heme. In terms of tissue distribution, expressed ubiquitously, with higher levels in root tissue than in shoot tissue.

In terms of biological role, hemoglobin-like protein that exhibits an unusual concentration-independent binding of O(2) and CO. May promote shoot organogenesis from root explants in vitro. Inhibits RGLG3 and RGLG4 ubiquitination activity. This Arabidopsis thaliana (Mouse-ear cress) protein is Two-on-two hemoglobin-3 (GLB3).